We begin with the raw amino-acid sequence, 101 residues long: NAD(P)H-quinone oxidoreductase subunit 4L, chloroplastic (101 aa).

A run of 3 helical transmembrane segments spans residues 2–22 (MLEH…YGLI), 32–52 (MCLE…SGFF), and 61–81 (IFSV…LAIV).

The protein belongs to the complex I subunit 4L family. As to quaternary structure, NDH is composed of at least 16 different subunits, 5 of which are encoded in the nucleus.

It localises to the plastid. The protein resides in the chloroplast thylakoid membrane. The catalysed reaction is a plastoquinone + NADH + (n+1) H(+)(in) = a plastoquinol + NAD(+) + n H(+)(out). It carries out the reaction a plastoquinone + NADPH + (n+1) H(+)(in) = a plastoquinol + NADP(+) + n H(+)(out). Functionally, NDH shuttles electrons from NAD(P)H:plastoquinone, via FMN and iron-sulfur (Fe-S) centers, to quinones in the photosynthetic chain and possibly in a chloroplast respiratory chain. The immediate electron acceptor for the enzyme in this species is believed to be plastoquinone. Couples the redox reaction to proton translocation, and thus conserves the redox energy in a proton gradient. The sequence is that of NAD(P)H-quinone oxidoreductase subunit 4L, chloroplastic from Jasminum nudiflorum (Winter jasmine).